A 208-amino-acid polypeptide reads, in one-letter code: PITH domain-containing protein ZK353.9 (208 aa).

One can recognise a PITH domain in the interval 17–189; that stretch reads EVPGDDVYRY…RIAIATYESR (173 aa).

It belongs to the PITHD1 family.

This is PITH domain-containing protein ZK353.9 from Caenorhabditis elegans.